The primary structure comprises 743 residues: Homeobox-leucine zipper protein PROTODERMAL FACTOR 2 (743 aa).

The tract at residues 1–72 is disordered; that stretch reads MYHPNMFESH…KKRYHRHTQR (72 aa). The span at 30–39 shows a compositional bias: basic and acidic residues; the sequence is SREDDFETKS. Residues 60–71 are compositionally biased toward basic residues; that stretch reads PNKKKRYHRHTQ. Residues 62–121 constitute a DNA-binding region (homeobox); the sequence is KKKRYHRHTQRQIQELESFFKECPHPDDKQRKELSRDLNLEPLQVKFWFQNKRTQMKAQS. Residues 110–192 adopt a coiled-coil conformation; the sequence is FQNKRTQMKA…DRISAIAAKY (83 aa). One can recognise an START domain in the interval 244-476; sequence SETDKPIIVE…LERQCERLAS (233 aa).

The protein belongs to the HD-ZIP homeobox family. Class IV subfamily. In terms of assembly, interacts with GAI/RGA2, RGA/RGA1/GRS, RGL2/SCL19 and ATML1. Binds to AIL7/PLT7, ANT, BBM and AIL1. In terms of tissue distribution, specifically expressed in the layer 1 (L1) of shoot meristems.

Its subcellular location is the nucleus. In terms of biological role, probable transcription factor that binds to the L1 box DNA sequence 5'-TAAATG[CT]A-3'. Plays a role in maintaining the identity of L1 cells, possibly by interacting with their L1 box or other target-gene promoters; binds to the LIP1 gene promoter and stimulates its expression upon imbibition. Acts as a positive regulator of gibberellins (GAs)-regulated epidermal gene expression (e.g. LIP1, LIP2, LTP1, FDH and PDF1). Functionally redundant to ATML1. Involved, together with HDG proteins (e.g. HDG1, HDG2, HDG5 and HDG12), in the regulation of flower organs development by promoting the expression of APETALA 3 (AP3) in the epidermis and internal cell layers of developing flowers. Seems to promote cell differentiation. The polypeptide is Homeobox-leucine zipper protein PROTODERMAL FACTOR 2 (Arabidopsis thaliana (Mouse-ear cress)).